The sequence spans 110 residues: uncharacterized protein (110 aa).

Belongs to the RuBisCO large chain family.

Its subcellular location is the mitochondrion. This is an uncharacterized protein from Arabidopsis thaliana (Mouse-ear cress).